Consider the following 187-residue polypeptide: Peptide deformylase (187 aa).

Residues cysteine 107 and histidine 149 each contribute to the Fe cation site. The active site involves glutamate 150. Residue histidine 153 participates in Fe cation binding.

Belongs to the polypeptide deformylase family. Fe(2+) serves as cofactor.

It carries out the reaction N-terminal N-formyl-L-methionyl-[peptide] + H2O = N-terminal L-methionyl-[peptide] + formate. Its function is as follows. Removes the formyl group from the N-terminal Met of newly synthesized proteins. Requires at least a dipeptide for an efficient rate of reaction. N-terminal L-methionine is a prerequisite for activity but the enzyme has broad specificity at other positions. The chain is Peptide deformylase from Microchaete diplosiphon (Fremyella diplosiphon).